The following is a 124-amino-acid chain: MKCFILAAALVLAFACIAASEPAETENEDLDDLSDLEDEEWLDELEEAAEYLESLREFEESRGYKDYMSKAKDLYKDIKKDKRVKAVMKSSYMKEAKKLYKDNPVRDAYQVYKGVKAGGKLLFG.

The N-terminal stretch at 1-19 (MKCFILAAALVLAFACIAA) is a signal peptide. The propeptide occupies 20–62 (SEPAETENEDLDDLSDLEDEEWLDELEEAAEYLESLREFEESR). Phenylalanine 123 bears the Phenylalanine amide mark.

The protein belongs to the cationic peptide 06 (cytoinsectotoxin) family. Expressed by the venom gland.

Its subcellular location is the secreted. Its function is as follows. Insecticidal and antimicrobial peptide. Has insecticidal activity against larvae of flesh fly S.carnaria. Has antibacterial activity against Gram-positive bacterium B.subtilis B-501 (MIC=2.5 uM) and Gram-negative bacterium E.coli DH5alpha (MIC=10 uM). The sequence is that of Cytoinsectotoxin-4 from Lachesana tarabaevi (Spider).